The primary structure comprises 1045 residues: Translation initiation factor IF-2 (1045 aa).

2 disordered regions span residues M1–P169 and Q184–P451. The segment covering S83–S94 has biased composition (gly residues). The segment covering R103–E123 has biased composition (basic and acidic residues). The span at A124–A151 shows a compositional bias: low complexity. Positions P152–A163 are enriched in pro residues. Over residues Q184–A199 the composition is skewed to low complexity. 2 stretches are compositionally biased toward basic and acidic residues: residues E227–S237 and R302–G323. Residues R338–G348 are compositionally biased toward pro residues. Low complexity predominate over residues G352–A363. 2 stretches are compositionally biased toward basic and acidic residues: residues V381–K393 and R438–G450. The tr-type G domain maps to P540–K710. The tract at residues G549–T556 is G1. G549 to T556 contributes to the GTP binding site. Residues G574–H578 form a G2 region. The interval D596–G599 is G3. GTP is bound by residues D596 to H600 and N650 to D653. The tract at residues N650–D653 is G4. The G5 stretch occupies residues S686–K688.

It belongs to the TRAFAC class translation factor GTPase superfamily. Classic translation factor GTPase family. IF-2 subfamily.

It is found in the cytoplasm. Its function is as follows. One of the essential components for the initiation of protein synthesis. Protects formylmethionyl-tRNA from spontaneous hydrolysis and promotes its binding to the 30S ribosomal subunits. Also involved in the hydrolysis of GTP during the formation of the 70S ribosomal complex. The sequence is that of Translation initiation factor IF-2 from Caulobacter sp. (strain K31).